A 555-amino-acid polypeptide reads, in one-letter code: Phosphoglucomutase (555 aa).

Residues Arg22 and Ser114 each contribute to the alpha-D-glucose 1,6-bisphosphate site. Residue Ser114 is the Phosphoserine intermediate of the active site. Mg(2+)-binding residues include Ser114, Asp279, Asp281, and Asp283. Residue Ser114 is modified to Phosphoserine. Residues Asp283, Arg284, Thr347, Glu366, Ser368, and Lys379 each coordinate alpha-D-glucose 1,6-bisphosphate.

Belongs to the phosphohexose mutase family. In terms of assembly, monomer. The cofactor is Mg(2+).

It localises to the cytoplasm. The catalysed reaction is alpha-D-glucose 1-phosphate = alpha-D-glucose 6-phosphate. It catalyses the reaction O-phospho-L-seryl-[protein] + alpha-D-glucose 1-phosphate = alpha-D-glucose 1,6-bisphosphate + L-seryl-[protein]. The enzyme catalyses alpha-D-glucose 1,6-bisphosphate + L-seryl-[protein] = O-phospho-L-seryl-[protein] + alpha-D-glucose 6-phosphate. In terms of biological role, catalyzes the reversible isomerization of alpha-D-glucose 1-phosphate to alpha-D-glucose 6-phosphate. The mechanism proceeds via the intermediate compound alpha-D-glucose 1,6-bisphosphate. Key enzyme in hexose metabolism. The reverse reaction is an essential step for biosynthesis because glucose 1-phosphate is the starting point for the synthesis of UDP-glucose, which acts as a precursor for the synthesis of oligosaccharides and trehalose. This chain is Phosphoglucomutase (pgmA), found in Aspergillus oryzae (strain ATCC 42149 / RIB 40) (Yellow koji mold).